Here is a 417-residue protein sequence, read N- to C-terminus: Indole-3-pyruvate monooxygenase YUCCA6 (417 aa).

36 to 41 (GAGPSG) lines the FAD pocket. 204–209 (GCGNSG) is an NADP(+) binding site.

It belongs to the FMO family. It depends on FAD as a cofactor. In terms of tissue distribution, highly expressed in roots but modestly expressed in the cauline leaves and flowers. Expressed in anthers.

The protein localises to the cytoplasm. The enzyme catalyses indole-3-pyruvate + NADPH + O2 + H(+) = (indol-3-yl)acetate + CO2 + NADP(+) + H2O. Its pathway is plant hormone metabolism; auxin biosynthesis. Functionally, involved in auxin biosynthesis via the indole-3-pyruvic acid (IPA) pathway. Also able to convert in vitro phenyl pyruvate (PPA) to phenyl acetic acid (PAA). Required for the formation of floral organs and vascular tissues. Belongs to the set of redundant YUCCA genes probably responsible for auxin biosynthesis in shoots. The chain is Indole-3-pyruvate monooxygenase YUCCA6 (YUC6) from Arabidopsis thaliana (Mouse-ear cress).